A 137-amino-acid chain; its full sequence is Large ribosomal subunit protein uL14A (137 aa).

Serine 2 bears the N-acetylserine mark. An N6,N6-dimethyllysine; by RKM1 mark is found at lysine 106 and lysine 110.

Belongs to the universal ribosomal protein uL14 family. In terms of assembly, component of the large ribosomal subunit (LSU). Mature yeast ribosomes consist of a small (40S) and a large (60S) subunit. The 40S small subunit contains 1 molecule of ribosomal RNA (18S rRNA) and 33 different proteins (encoded by 57 genes). The large 60S subunit contains 3 rRNA molecules (25S, 5.8S and 5S rRNA) and 46 different proteins (encoded by 81 genes). Methylated by RKM1 at 2 different sites, but it is unclear which are the 2 methylated residues among Lys-40, Lys-106 and/or Lys-110.

It localises to the cytoplasm. Component of the ribosome, a large ribonucleoprotein complex responsible for the synthesis of proteins in the cell. The small ribosomal subunit (SSU) binds messenger RNAs (mRNAs) and translates the encoded message by selecting cognate aminoacyl-transfer RNA (tRNA) molecules. The large subunit (LSU) contains the ribosomal catalytic site termed the peptidyl transferase center (PTC), which catalyzes the formation of peptide bonds, thereby polymerizing the amino acids delivered by tRNAs into a polypeptide chain. The nascent polypeptides leave the ribosome through a tunnel in the LSU and interact with protein factors that function in enzymatic processing, targeting, and the membrane insertion of nascent chains at the exit of the ribosomal tunnel. The polypeptide is Large ribosomal subunit protein uL14A (Saccharomyces cerevisiae (strain ATCC 204508 / S288c) (Baker's yeast)).